We begin with the raw amino-acid sequence, 188 residues long: MAADQKTLLDDLTRRMDGALESLRRDFAGLRSGRASPALIEPVRVEAYGGEVPLTQVGSIAVPEARMLTVQVWDRSLVGAVERAIRDSGLGLNPAADGQTVRVPIPQLTEERRGELARTAGKYSENAKIAVRGVRRDGMDQTKAQEKKGDISQDDVKVWSDAIQKLTDQYVKRIDEMLAEKEREIKQV.

This sequence belongs to the RRF family.

The protein localises to the cytoplasm. Responsible for the release of ribosomes from messenger RNA at the termination of protein biosynthesis. May increase the efficiency of translation by recycling ribosomes from one round of translation to another. The polypeptide is Ribosome-recycling factor (Gluconacetobacter diazotrophicus (strain ATCC 49037 / DSM 5601 / CCUG 37298 / CIP 103539 / LMG 7603 / PAl5)).